The primary structure comprises 208 residues: High frequency lysogenization protein HflD homolog (208 aa).

Positions 91–125 (LMVLERKLNANKQAMNQLGERLGQLERQLAHFDLE) form a coiled coil.

The protein belongs to the HflD family.

It is found in the cytoplasm. It localises to the cell inner membrane. The polypeptide is High frequency lysogenization protein HflD homolog (Serratia proteamaculans (strain 568)).